We begin with the raw amino-acid sequence, 334 residues long: MIVIPRYTIIKEKASIRIPEILDNLNLKNPLVITGKNTQKYNKDFDFIYYDEIETSDLENLKNYTKDYDSVIGIGGGRPIDIGKLIAHKSKKPFLSVPTTASNDGIASPIVSLTQPSYMTEAPIAIIADTEIIKKSPKKLLSAGMGDIVSNITAVLDWELGKIEKLEKYSDSSGIFSKTIAIELMDYVLNSDLEEYPKKLVKALIGSGISIAIAHSSRPASGSEHLFSHALDNMKEKYGIDTNSLHGEQCGVGTLAIAQIYLEEGKIEVETVEMIKNSLKAVDAPVTAKQLGFDEEILSEALSSAHSLRNRHTILRNGLSKEKAREILEKSEII.

NAD(+) is bound by residues 77 to 81 and 99 to 102; these read GRPID and TTAS. Asp104 lines the substrate pocket. Ser108 provides a ligand contact to NAD(+). Residue Asp147 participates in substrate binding. Positions 147 and 225 each coordinate Zn(2+). His229 is a substrate binding site. His246 is a Zn(2+) binding site.

The protein belongs to the glycerol-1-phosphate dehydrogenase family. Zn(2+) is required as a cofactor.

The protein localises to the cytoplasm. The catalysed reaction is sn-glycerol 1-phosphate + NAD(+) = dihydroxyacetone phosphate + NADH + H(+). It catalyses the reaction sn-glycerol 1-phosphate + NADP(+) = dihydroxyacetone phosphate + NADPH + H(+). It participates in membrane lipid metabolism; glycerophospholipid metabolism. Functionally, catalyzes the NAD(P)H-dependent reduction of dihydroxyacetonephosphate (DHAP or glycerone phosphate) to glycerol 1-phosphate (G1P). The G1P thus generated is used as the glycerophosphate backbone of phospholipids in the cellular membranes of Archaea. The chain is Glycerol-1-phosphate dehydrogenase [NAD(P)+] from Methanococcus maripaludis (strain C7 / ATCC BAA-1331).